The sequence spans 485 residues: Zinc finger protein 639 (485 aa).

Basic residues predominate over residues 1–14 (MNEYPKKRKRKTLH). The segment at 1-20 (MNEYPKKRKRKTLHPSRYSD) is disordered. Phosphoserine is present on serine 60. Lysine 76 participates in a covalent cross-link: Glycyl lysine isopeptide (Lys-Gly) (interchain with G-Cter in SUMO2). A Phosphoserine modification is found at serine 88. Glycyl lysine isopeptide (Lys-Gly) (interchain with G-Cter in SUMO2) cross-links involve residues lysine 177, lysine 181, and lysine 226. 8 consecutive C2H2-type zinc fingers follow at residues 204 to 227 (YKCE…ILKH), 233 to 255 (NVCR…AKLH), 260 to 283 (YICK…ADTH), 289 to 311 (YWCE…FQEH), 374 to 397 (FVCQ…AIEH), 403 to 425 (HVCD…LNSH), 431 to 454 (YLCQ…DFKH), and 460 to 482 (HKCS…LPVH). The interval 371–455 (KNFFVCQVCG…LKIHLDFKHS (85 aa)) is interaction with CTNNA2.

It belongs to the krueppel C2H2-type zinc-finger protein family. In terms of assembly, interacts with CTNNA2.

The protein localises to the nucleus. Functionally, binds DNA and may function as a transcriptional repressor. This is Zinc finger protein 639 (ZNF639) from Bos taurus (Bovine).